A 4239-amino-acid polypeptide reads, in one-letter code: Tenellin synthetase (4239 aa).

The Ketosynthase family 3 (KS3) domain occupies 15 to 454 (SEPIAIIGSA…GTNAHAIIER (440 aa)). Catalysis depends on for beta-ketoacyl synthase activity residues cysteine 189, histidine 326, and histidine 374. The tract at residues 589 to 923 (VFTGQGAQWP…ANDAVAFSTA (335 aa)) is malonyl-CoA:ACP transacylase (MAT) domain. The interval 993-1135 (HELLGRRTPD…GRIAVQLGAK (143 aa)) is N-terminal hotdog fold. The dehydratase (DH) domain stretch occupies residues 993–1310 (HELLGRRTPD…GFEVRAVGEP (318 aa)). Residues 993–1313 (HELLGRRTPD…VRAVGEPDAS (321 aa)) form the PKS/mFAS DH domain. The active-site Proton acceptor; for dehydratase activity is the histidine 1025. The segment at 1158–1313 (LQQLDCEKLY…VRAVGEPDAS (156 aa)) is C-terminal hotdog fold. Aspartate 1217 functions as the Proton donor; for dehydratase activity in the catalytic mechanism. Residues 1459–1652 (RLYTEDKGMH…FSGVDHIVHD (194 aa)) are methyltransferase (MT) domain. Residues 2209–2382 (TYLMVGAAGG…AASIIHVGHV (174 aa)) are ketoreductase (KR) domain. In terms of domain architecture, Carrier 1 spans 2502-2582 (EAAVAALKGF…QLSALAAKLA (81 aa)). Serine 2542 bears the O-(pantetheine 4'-phosphoryl)serine mark. Disordered regions lie at residues 2587–2629 (KKRA…EIAQ) and 2642–2712 (LEAS…FFTQ). Polar residues-rich tracts occupy residues 2648 to 2662 (GGSS…SSVS) and 2670 to 2681 (ESTLQSSDNNGE). The segment covering 2682–2698 (STPSKSSNCNSDSGSDN) has biased composition (low complexity). The interval 2723–3169 (REAPMSPAQS…SAQSVGDCVV (447 aa)) is condensation (C) domain. Residues 3203–3614 (CQQHSTKSAI…DGTLLCFGRI (412 aa)) form an adenylation (A) (KR) domain region. Positions 3728 to 3752 (EAAAATSPSNNNINNNTPSGGGGEK) are disordered. Positions 3729 to 3745 (AAAATSPSNNNINNNTP) are enriched in low complexity. Residues 3751–3835 (EKMTVRQGEL…GMARCVAEQR (85 aa)) form the Carrier 2 domain. The residue at position 3795 (serine 3795) is an O-(pantetheine 4'-phosphoryl)serine. Positions 3862 to 3892 (EKLQHSSASSSSSSSSSSSAGSSSTQRPRKT) are disordered. The span at 3867 to 3885 (SSASSSSSSSSSSSAGSSS) shows a compositional bias: low complexity. The segment at 3899–4145 (LTGATGFLGG…LDFGQVDKVV (247 aa)) is reductase (RED) domain.

It in the C-terminal section; belongs to the NRP synthetase family.

The protein operates within secondary metabolite biosynthesis. Functionally, hybrid PKS-NRPS synthetase; part of the gene cluster that mediates the biosynthesis of tenellin-type 2-pyridones, iron-chelating compounds involved in iron stress tolerance, competition with the natural competitor fungus Metarhizium robertsii and insect hosts infection. TenS catalyzes the assembly of the polyketide-amino acid backbone. Because tenS lacks a designated enoylreductase (ER) domain, the required activity is provided the enoyl reductase tenC. Upon formation of the polyketide backbone on the thiotemplate, the triketide is transferred to the NRPS module and linked to tyrosine to produce the pyrrolidine-2-dione intermediates, including pretellinin A, 11-hydropretellenin A, 12-hydropretellenin A, 13-hydropretellenin A, 14-hydropretellenin A, 12-oxopretellenin A and prototellinin D. The pathway begins with the assembly of the polyketide-amino acid backbone by the hybrid PKS-NRPS tenS with the help of the enoyl reductase tenC. These enzymes catalyze the synthesis of the pyrrolidine-2-dione intermediates pretellinin A, 11-hydropretellenin A, 12-hydropretellenin A, 13-hydropretellenin A, 14-hydropretellenin A, 12-oxopretellenin A and prototellinin D. The cytochrome P450 monooxygenase tenA then catalyzes an oxidative ring expansion of pretenellin A and 14-hydropretellenin A to form the 2-pyridone core, leading to pretenellin B and pyridovericin, respectively. The cytochrome P450 monooxygenase tenB is then required for the selective N-hydroxylation of the 2-pyridone nitrogen of yield tellinin and 15-hydroxytellenin (15-HT), respectively. The UDP-glucosyltransferase GT1 and the methyltransferase MT1, located outside the tenS gene cluster, contribute to the stepwise glycosylation and methylation of 15-HT to obtain the glycoside pyridovericin-N-O-(4-O-methyl-beta-D-glucopyranoside) (PMGP). Additional related compounds such as 1-O-methyl-15-HT, (8Z)-1-O-methyl-15-HT, and O-methyltenellin A are also produced but the enzymes involved in their biosynthesis have still to be determined. This Beauveria bassiana (White muscardine disease fungus) protein is Tenellin synthetase.